The following is a 350-amino-acid chain: Phosphotriesterase-related protein (350 aa).

H24, H26, E170, H202, H231, and D299 together coordinate a divalent metal cation.

It belongs to the metallo-dependent hydrolases superfamily. Phosphotriesterase family. The cofactor is a divalent metal cation.

The chain is Phosphotriesterase-related protein from Nematostella vectensis (Starlet sea anemone).